Reading from the N-terminus, the 131-residue chain is Small ribosomal subunit protein uS11 (131 aa).

This sequence belongs to the universal ribosomal protein uS11 family. Part of the 30S ribosomal subunit. Interacts with proteins S7 and S18. Binds to IF-3.

Located on the platform of the 30S subunit, it bridges several disparate RNA helices of the 16S rRNA. Forms part of the Shine-Dalgarno cleft in the 70S ribosome. The sequence is that of Small ribosomal subunit protein uS11 from Syntrophotalea carbinolica (strain DSM 2380 / NBRC 103641 / GraBd1) (Pelobacter carbinolicus).